A 988-amino-acid chain; its full sequence is Kinesin-like protein CIN8 (988 aa).

A Kinesin motor domain is found at 33-470; the sequence is NILVAVRCRG…LEYASKAKNI (438 aa). 125 to 132 serves as a coordination point for ATP; the sequence is GMTSTGKT. The tract at residues 206–301 is disordered; that stretch reads FDSNVNGTSA…NSNNTNQQQS (96 aa). Positions 208-237 are enriched in low complexity; that stretch reads SNVNGTSASGSSSRSSSRNNSPRSAPDNSR. Polar residues predominate over residues 248–280; that stretch reads HNTTGNSKISNNNHNKFSRFKQTSQESTRAHAS. The span at 281-301 shows a compositional bias: low complexity; sequence NNHQNVHIPNNNSNNTNQQQS. 2 coiled-coil regions span residues 514–619 and 707–769; these read EHYK…ELQQ and KLAE…MQNF. Basic and acidic residues predominate over residues 965–974; that stretch reads ALQEKRKPED. The segment at 965–988 is disordered; the sequence is ALQEKRKPEDEVLLQAKLQRRNPD.

This sequence belongs to the TRAFAC class myosin-kinesin ATPase superfamily. Kinesin family. BimC subfamily.

The protein resides in the cytoplasm. It is found in the cytoskeleton. The protein localises to the spindle. In terms of biological role, elongates the mitotic spindle by interacting with spindle microtubules to generate an outward force pushing spindle poles apart. Following spindle assembly, CIN8 and KIP1 apparently act to oppose a force, possibly generated by KAR3, that draws separated poles back together. The sequence is that of Kinesin-like protein CIN8 (CIN8) from Candida glabrata (strain ATCC 2001 / BCRC 20586 / JCM 3761 / NBRC 0622 / NRRL Y-65 / CBS 138) (Yeast).